Reading from the N-terminus, the 315-residue chain is Acetaldehyde dehydrogenase (315 aa).

Residue 13-16 coordinates NAD(+); sequence SGNI. Cys-131 functions as the Acyl-thioester intermediate in the catalytic mechanism. NAD(+)-binding positions include 163–171 and Asn-290; that span reads SAGPGTRAN.

This sequence belongs to the acetaldehyde dehydrogenase family.

It carries out the reaction acetaldehyde + NAD(+) + CoA = acetyl-CoA + NADH + H(+). The polypeptide is Acetaldehyde dehydrogenase (Xanthobacter autotrophicus (strain ATCC BAA-1158 / Py2)).